Here is a 356-residue protein sequence, read N- to C-terminus: tRNA pseudouridine synthase D (356 aa).

Catalysis depends on Asp-84, which acts as the Nucleophile. The TRUD domain maps to 159-302 (GVPNYYGPQR…RRGARRPIRV (144 aa)).

The protein belongs to the pseudouridine synthase TruD family.

The enzyme catalyses uridine(13) in tRNA = pseudouridine(13) in tRNA. Functionally, responsible for synthesis of pseudouridine from uracil-13 in transfer RNAs. The sequence is that of tRNA pseudouridine synthase D from Thermus thermophilus (strain ATCC BAA-163 / DSM 7039 / HB27).